Here is a 241-residue protein sequence, read N- to C-terminus: 3-dehydroquinate dehydratase (241 aa).

3-dehydroquinate is bound by residues 35 to 37 (ELR) and Arg70. The Proton donor/acceptor role is filled by His132. Catalysis depends on Lys159, which acts as the Schiff-base intermediate with substrate. 3-dehydroquinate-binding residues include Arg201 and Gln224.

The protein belongs to the type-I 3-dehydroquinase family. Homodimer.

It carries out the reaction 3-dehydroquinate = 3-dehydroshikimate + H2O. The protein operates within metabolic intermediate biosynthesis; chorismate biosynthesis; chorismate from D-erythrose 4-phosphate and phosphoenolpyruvate: step 3/7. In terms of biological role, involved in the third step of the chorismate pathway, which leads to the biosynthesis of aromatic amino acids. Catalyzes the cis-dehydration of 3-dehydroquinate (DHQ) and introduces the first double bond of the aromatic ring to yield 3-dehydroshikimate. The polypeptide is 3-dehydroquinate dehydratase (Staphylococcus carnosus (strain TM300)).